Here is a 359-residue protein sequence, read N- to C-terminus: Fe-S cluster assembly protein DRE2 (359 aa).

The N-terminal SAM-like domain stretch occupies residues 1–148; that stretch reads MASTGRVLLL…KPDVAAQQAV (148 aa). 2 disordered regions span residues 97–116 and 149–210; these read NKAW…NDND and PLKL…PSGV. The segment at 149 to 246 is linker; the sequence is PLKLGRRKKE…EDELLGEDDM (98 aa). Basic residues predominate over residues 152 to 164; it reads LGRRKKEKERRHP. Residues 167-183 show a composition bias toward polar residues; it reads NDVTNGKVNAPSSNGVN. The span at 184 to 200 shows a compositional bias: low complexity; it reads ASTSTATATATTTTTTT. 4 residues coordinate [2Fe-2S] cluster: cysteine 256, cysteine 267, cysteine 270, and cysteine 272. Residues 256–272 are fe-S binding site A; it reads CRPKPGKRRRACKDCSC. Cysteine 322, cysteine 325, cysteine 333, and cysteine 336 together coordinate [4Fe-4S] cluster. 2 short sequence motifs (cx2C motif) span residues 322-325 and 333-336; these read CGNC and CDGC. The tract at residues 322–336 is fe-S binding site B; the sequence is CGNCSLGDAFRCDGC.

It belongs to the anamorsin family. In terms of assembly, monomer. Interacts with TAH18. Interacts with MIA40. Requires [2Fe-2S] cluster as cofactor. The cofactor is [4Fe-4S] cluster.

Its subcellular location is the cytoplasm. The protein localises to the mitochondrion intermembrane space. Component of the cytosolic iron-sulfur (Fe-S) protein assembly (CIA) machinery required for the maturation of extramitochondrial Fe-S proteins. Part of an electron transfer chain functioning in an early step of cytosolic Fe-S biogenesis, facilitating the de novo assembly of a [4Fe-4S] cluster on the scaffold complex CFD1-NBP35. Electrons are transferred to DRE2 from NADPH via the FAD- and FMN-containing protein TAH18. TAH18-DRE2 are also required for the assembly of the diferric tyrosyl radical cofactor of ribonucleotide reductase (RNR), probably by providing electrons for reduction during radical cofactor maturation in the catalytic small subunit RNR2. In Blastomyces gilchristii (strain SLH14081) (Blastomyces dermatitidis), this protein is Fe-S cluster assembly protein DRE2.